The following is a 249-amino-acid chain: NH(3)-dependent NAD(+) synthetase (249 aa).

Asp34 lines the Mg(2+) pocket. Deamido-NAD(+) is bound at residue Arg110. Thr130 contributes to the ATP binding site. Position 135 (Glu135) interacts with Mg(2+). Lys143 and Asp150 together coordinate deamido-NAD(+). Positions 159 and 181 each coordinate ATP. 232 to 233 (HK) provides a ligand contact to deamido-NAD(+).

This sequence belongs to the NAD synthetase family. In terms of assembly, homodimer.

The catalysed reaction is deamido-NAD(+) + NH4(+) + ATP = AMP + diphosphate + NAD(+) + H(+). It functions in the pathway cofactor biosynthesis; NAD(+) biosynthesis; NAD(+) from deamido-NAD(+) (ammonia route): step 1/1. Catalyzes the ATP-dependent amidation of deamido-NAD to form NAD. Uses ammonia as a nitrogen source. This chain is NH(3)-dependent NAD(+) synthetase, found in Picrophilus torridus (strain ATCC 700027 / DSM 9790 / JCM 10055 / NBRC 100828 / KAW 2/3).